A 1123-amino-acid polypeptide reads, in one-letter code: Ubiquitin carboxyl-terminal hydrolase 36 (1123 aa).

Composition is skewed to basic and acidic residues over residues 1–19 (MPIV…KDSA) and 69–90 (GASR…EHTY). Disordered stretches follow at residues 1-22 (MPIV…ADDG) and 67-95 (TEGA…SCGD). Residues 122 to 423 (AGLHNLGNTC…QAYVLFYLRI (302 aa)) form the USP domain. Residue C131 is the Nucleophile of the active site. The Proton acceptor role is filled by H382. Phosphoserine is present on residues S429 and S464. The tract at residues 430-577 (PEGLISRTGS…RQGSWDSRDV (148 aa)) is disordered. Over residues 491 to 503 (RNGSTLGLKSQNG) the composition is skewed to polar residues. A compositionally biased stretch (low complexity) spans 510–519 (PSGSPSPKLS). S546 carries the phosphoserine modification. A compositionally biased stretch (low complexity) spans 557-571 (SNSNSSRSGSQRQGS). Phosphoserine is present on S582. Residues 589 to 999 (ATANGHGLKG…ESSSCAPSAN (411 aa)) are disordered. Residues 597–609 (KGNDESAGLDRRG) show a composition bias toward basic and acidic residues. A compositionally biased stretch (low complexity) spans 610–623 (SSSSSPEHSASSDS). Residues 640 to 654 (SQETNCSTAGHSKTP) are compositionally biased toward polar residues. S667 carries the phosphoserine modification. A compositionally biased stretch (polar residues) spans 669-681 (VLSNTTTEPASTM). S682 carries the post-translational modification Phosphoserine. Residues 687–697 (KKLALSAKKAS) show a composition bias toward low complexity. S713 and S742 each carry phosphoserine. Polar residues predominate over residues 773–785 (EPRSCSSISTALP). Residues 841 to 850 (HGKRKRKKKK) show a composition bias toward basic residues. Over residues 891–902 (GTQPQVNGQQVG) the composition is skewed to polar residues. S952 is modified (phosphoserine). A compositionally biased stretch (basic and acidic residues) spans 963 to 975 (QETQRAVEEDGHL).

The protein belongs to the peptidase C19 family. As to quaternary structure, interacts with isoform 3 of FBXW7; the interaction inhibits MYC degradation induced by SCF(FBW7) complex. Interacts with NTRK1; USP36 does not deubiquitinate NTRK1. Interacts with NEDD4L (via domains WW1, 3 and 4); the interaction inhibits ubiquitination of, at least, NTRK1, KCNQ2 and KCNQ3 by NEDD4L. Interacts (via C-terminus) with EXOSC10 (via C-terminus); the interaction is facilitated by the association with RNA and promotes sumoylation of EXOSC10. Polyubiquitinated by NEDD4L, no effect on USP36 protein levels. Both proteins interact with and regulate each other's ubiquitination levels. In terms of tissue distribution, broadly expressed.

Its subcellular location is the nucleus. It localises to the nucleolus. The protein localises to the cytoplasm. The enzyme catalyses Thiol-dependent hydrolysis of ester, thioester, amide, peptide and isopeptide bonds formed by the C-terminal Gly of ubiquitin (a 76-residue protein attached to proteins as an intracellular targeting signal).. Functionally, deubiquitinase essential for the regulation of nucleolar structure and function. Required for cell and organism viability. Plays an important role in ribosomal RNA processing and protein synthesis, which is mediated, at least in part, through deubiquitination of DHX33, NPM1 and FBL, regulating their protein stability. Functions as a transcriptional repressor by deubiquiting histone H2B at the promoters of genes critical for cellular differentiation, such as CDKN1A, thereby preventing histone H3 'Lys-4' trimethylation (H3K4). Specifically deubiquitinates MYC in the nucleolus, leading to prevent MYC degradation by the proteasome: acts by specifically interacting with isoform 3 of FBXW7 (FBW7gamma) in the nucleolus and counteracting ubiquitination of MYC by the SCF(FBW7) complex. In contrast, it does not interact with isoform 1 of FBXW7 (FBW7alpha) in the nucleoplasm. Interacts to and regulates the actions of E3 ubiquitin-protein ligase NEDD4L over substrates such as NTRK1, KCNQ2 and KCNQ3, affecting their expression an functions. Deubiquitinates SOD2, regulates SOD2 protein stability. Deubiquitinase activity is required to control selective autophagy activation by ubiquitinated proteins. Promotes CEP63 stabilization through 'Lys-48'-linked deubiquitination leading to increased stability. Acts as a SUMO ligase to promote EXOSC10 sumoylation critical for the nucleolar RNA exosome function in rRNA processing. Binds to pre-rRNAs. The chain is Ubiquitin carboxyl-terminal hydrolase 36 from Homo sapiens (Human).